Here is a 357-residue protein sequence, read N- to C-terminus: UDP-xylose transporter 3 (357 aa).

10 helical membrane passes run 7-27 (FQLG…SIVI), 31-51 (ALIS…HLLV), 75-95 (VMGF…SLGF), 100-120 (FYQM…TLFF), 132-152 (LTIL…LNML), 154-174 (SVLS…TNTI), 194-214 (AITL…QNVF), 224-244 (FFIV…FLVI), 250-270 (VTYQ…GYVL), and 280-300 (ILGI…CSIE). Position 334 is a phosphoserine (S334).

This sequence belongs to the TPT transporter family. TPT (TC 2.A.7.9) subfamily. As to expression, ubiquitous.

The protein localises to the golgi apparatus membrane. Nucleotide-sugar transporter that transports UDP-xylose and UMP in a strict counter-exchange mode. The chain is UDP-xylose transporter 3 from Arabidopsis thaliana (Mouse-ear cress).